The primary structure comprises 504 residues: Potassium voltage-gated channel subfamily V member 1 (504 aa).

2 disordered regions span residues 1-22 and 172-193; these read MDLS…GGSL and KKDT…QGPC. Residues 1 to 214 lie on the Cytoplasmic side of the membrane; the sequence is MDLSPRNRPL…EKPGSSTAAR (214 aa). The span at 10–22 shows a compositional bias: low complexity; it reads LLESSSLDSGGSL. Residues 172–185 are compositionally biased toward basic and acidic residues; that stretch reads KKDTDDQESQHESE. The helical transmembrane segment at 215–235 threads the bilayer; the sequence is IFGVISIIFVAVSIVNMALMS. Topologically, residues 236–242 are extracellular; sequence AELSWLN. Residues 243 to 263 form a helical membrane-spanning segment; the sequence is LQLLEILEYVCISWFTGEFIL. Over 264-280 the chain is Cytoplasmic; it reads RFLCVKDRCRFLRKVPN. A helical membrane pass occupies residues 281–301; that stretch reads IIDLLAILPFYITLLVESLSG. Topologically, residues 302–313 are extracellular; the sequence is SHTTQELENVGR. Residues 314–335 traverse the membrane as a helical; Voltage-sensor segment; it reads LVQVLRLLRALRMLKLGRHSTG. The Cytoplasmic segment spans residues 336–349; sequence LRSLGMTITQCYEE. The chain crosses the membrane as a helical span at residues 350-370; that stretch reads VGLLLLFLSVGISIFSTIEYF. The Selectivity filter motif lies at 396-401; the sequence is TVGYGD. A helical transmembrane segment spans residues 411 to 431; that stretch reads IVAFMCILSGILVLALPIAII. The Cytoplasmic portion of the chain corresponds to 432-504; that stretch reads NDRFSACYFT…RSSGGDDFWF (73 aa).

It belongs to the potassium channel family. V (TC 1.A.1.2) subfamily. Kv8.1/KCNV1 sub-subfamily. Heteromultimer with KCNB1 and KCNB2. Interacts with KCNC4 and KCND1. As to expression, detected in brain, throughout layers II, IV and VI of the brain cortex. Detected in cerebellum and hippocampus, in the granule cell layer, Purkinje cell layer, pyramidal cell layer and dentate gyrus. Detected at lower levels in olfactory bulb, amygdala, thalamus, hypothalamus, midbrain and brainstem.

Its subcellular location is the cell membrane. Functionally, potassium channel subunit that does not form functional channels by itself. Modulates KCNB1 and KCNB2 channel activity by shifting the threshold for inactivation to more negative values and by slowing the rate of inactivation. Can down-regulate the channel activity of KCNB1, KCNB2, KCNC4 and KCND1, possibly by trapping them in intracellular membranes. The polypeptide is Potassium voltage-gated channel subfamily V member 1 (KCNV1) (Mesocricetus auratus (Golden hamster)).